Here is a 164-residue protein sequence, read N- to C-terminus: uncharacterized protein (164 aa).

Residues 1 to 17 are compositionally biased toward polar residues; sequence MNSRVPATQSWFSSHLP. Positions 1–48 are disordered; sequence MNSRVPATQSWFSSHLPTTEPDLEPATAAEGSTTETATLSPETTSFND. Positions 24–45 are enriched in low complexity; it reads EPATAAEGSTTETATLSPETTS. The chain crosses the membrane as a helical span at residues 64–84; the sequence is MLLSFGIITVIGLAVAMVLYI. Residues 106 to 130 adopt a coiled-coil conformation; the sequence is TEEQDELEQELLEHGRDAASMQAAA.

It is found in the membrane. This is an uncharacterized protein from Mus musculus (Mouse).